Reading from the N-terminus, the 224-residue chain is Cerebellin-2 (224 aa).

The first 51 residues, 1-51 (MQAPGRGPLGLRLMMPGRRGALREPGGCGSCLGVALALLLLLLPACCPVRA), serve as a signal peptide directing secretion. N-linked (GlcNAc...) asparagine glycosylation is found at Asn53 and Asn110. The C1q domain occupies 88–224 (SGSAKVAFSA…TFSGFLVFPL (137 aa)).

Homohexamer; disulfide-linked homotrimers. The trimers are assembled via the globular C1q domains. The trimers associate via N-terminal cysteine residues to form disulfide-linked hexamers. May form homooligomers or heterooligomers with CBLN1 and CBLN3 prior to secretion. Once secreted, does not interact with other CBLN family members. Interacts with GRID2, and more weakly with GRID1. Interacts with NRXN1 and NRXN2 long and short isoforms produced by alternative promoter usage. Weakly interacts with NRXN3 short isoform and not at all with NRXN3 long isoform.

Its subcellular location is the secreted. Its function is as follows. Acts as a synaptic organizer in specific subsets of neurons in the brain. Essential for long-term maintenance but not establishment of excitatory synapses. Functions as part of a trans-synaptic complex by binding to postsynaptic GRID1 and presynaptic neurexins. This interaction helps regulate the activity of NMDA and AMPA receptors at hippocampal synapses without affecting synapse formation. NRXN1B-CBLN2-GRID1 complex transduce presynaptic signals into postsynaptic NMDAR response. NRXN3B-CBLN2-GRID1 complex transduce presynaptic signals into postsynaptic AMPAR response. The sequence is that of Cerebellin-2 from Homo sapiens (Human).